Reading from the N-terminus, the 732-residue chain is NAD(P)H-quinone oxidoreductase subunit 5, chloroplastic (732 aa).

A run of 16 helical transmembrane segments spans residues 9-29, 39-59, 89-109, 125-145, 147-167, 184-204, 215-235, 258-278, 291-311, 327-347, 353-373, 395-415, 420-440, 544-564, 604-624, and 712-732; these read WIVP…LLFF, ICAI…YNLS, IDPL…IVMI, FVYL…PNLI, IYIF…FWFT, IGDF…GSFE, LLIN…FLFL, TPIS…YLVA, MSVI…LAFF, LGYM…FHLI, KALL…IVGY, GTTF…ACFW, IIAD…LTAG, LIPL…GAPL, ISIA…ASIF, and SYLF…LLII.

The protein belongs to the complex I subunit 5 family. As to quaternary structure, NDH is composed of at least 16 different subunits, 5 of which are encoded in the nucleus.

The protein localises to the plastid. The protein resides in the chloroplast thylakoid membrane. The enzyme catalyses a plastoquinone + NADH + (n+1) H(+)(in) = a plastoquinol + NAD(+) + n H(+)(out). It catalyses the reaction a plastoquinone + NADPH + (n+1) H(+)(in) = a plastoquinol + NADP(+) + n H(+)(out). In terms of biological role, NDH shuttles electrons from NAD(P)H:plastoquinone, via FMN and iron-sulfur (Fe-S) centers, to quinones in the photosynthetic chain and possibly in a chloroplast respiratory chain. The immediate electron acceptor for the enzyme in this species is believed to be plastoquinone. Couples the redox reaction to proton translocation, and thus conserves the redox energy in a proton gradient. This Anthoceros angustus (Hornwort) protein is NAD(P)H-quinone oxidoreductase subunit 5, chloroplastic (ndhF).